A 237-amino-acid chain; its full sequence is uncharacterized protein (237 aa).

The helical transmembrane segment at 53-70 (LIFLATVLAGLILFYFGV) threads the bilayer. The disordered stretch occupies residues 85–155 (PPIVIKPVAP…TQEKKDVKVA (71 aa)). Positions 98-157 (KTQESNQTTKKEVKQEEQKKEEPKKMVQKQETQEKREVKKSEKNEVKQTQEKKDVKVAKK) form a coiled coil. 2 stretches are compositionally biased toward basic and acidic residues: residues 106 to 122 (TKKE…EPKK) and 128 to 155 (ETQE…VKVA). The SPOR domain maps to 165–237 (AANLRTYKFQ…HFKDAIFVRK (73 aa)).

It is found in the membrane. This is an uncharacterized protein from Aquifex aeolicus (strain VF5).